The sequence spans 1366 residues: DNA-directed RNA polymerase subunit beta (1366 aa).

This sequence belongs to the RNA polymerase beta chain family. As to quaternary structure, the RNAP catalytic core consists of 2 alpha, 1 beta, 1 beta' and 1 omega subunit. When a sigma factor is associated with the core the holoenzyme is formed, which can initiate transcription.

The enzyme catalyses RNA(n) + a ribonucleoside 5'-triphosphate = RNA(n+1) + diphosphate. Functionally, DNA-dependent RNA polymerase catalyzes the transcription of DNA into RNA using the four ribonucleoside triphosphates as substrates. This is DNA-directed RNA polymerase subunit beta from Marinomonas sp. (strain MWYL1).